A 366-amino-acid polypeptide reads, in one-letter code: Alanine racemase (366 aa).

The Proton acceptor; specific for D-alanine role is filled by Lys-40. Lys-40 carries the post-translational modification N6-(pyridoxal phosphate)lysine. Residue Arg-136 coordinates substrate. Tyr-263 serves as the catalytic Proton acceptor; specific for L-alanine. Met-310 contacts substrate.

It belongs to the alanine racemase family. Pyridoxal 5'-phosphate serves as cofactor.

It carries out the reaction L-alanine = D-alanine. It functions in the pathway amino-acid biosynthesis; D-alanine biosynthesis; D-alanine from L-alanine: step 1/1. In terms of biological role, catalyzes the interconversion of L-alanine and D-alanine. May also act on other amino acids. This is Alanine racemase (alr) from Streptococcus pyogenes serotype M1.